The chain runs to 258 residues: Shikimate dehydrogenase (NADP(+)) (258 aa).

Shikimate-binding positions include 14 to 16 and Thr61; that span reads SES. Lys65 acts as the Proton acceptor in catalysis. Positions 86 and 101 each coordinate shikimate. NADP(+) is bound by residues 125 to 129 and Leu211; that span reads GSGGS. Residue Tyr213 participates in shikimate binding. An NADP(+)-binding site is contributed by Gly234.

Belongs to the shikimate dehydrogenase family. In terms of assembly, homodimer.

It carries out the reaction shikimate + NADP(+) = 3-dehydroshikimate + NADPH + H(+). Its pathway is metabolic intermediate biosynthesis; chorismate biosynthesis; chorismate from D-erythrose 4-phosphate and phosphoenolpyruvate: step 4/7. Its function is as follows. Involved in the biosynthesis of the chorismate, which leads to the biosynthesis of aromatic amino acids. Catalyzes the reversible NADPH linked reduction of 3-dehydroshikimate (DHSA) to yield shikimate (SA). This Clostridium botulinum (strain ATCC 19397 / Type A) protein is Shikimate dehydrogenase (NADP(+)).